We begin with the raw amino-acid sequence, 287 residues long: O-ureido-serine racemase (287 aa).

Asn-20 contributes to the substrate binding site. Cys-81 serves as the catalytic Proton donor. Substrate-binding positions include 82–83 (GN), Asn-167, Asn-200, and 218–219 (EY). The active-site Proton acceptor is Cys-227. 228-229 (GS) provides a ligand contact to substrate.

It belongs to the diaminopimelate epimerase family. Monomer.

Its subcellular location is the cytoplasm. The enzyme catalyses O-ureido-L-serine = O-ureido-D-serine. Inhibited by thiol-inactivating reagents such as iodoacetamide and Hg(2+) ions. Its function is as follows. Involved in the biosynthesis of the antibiotic D-cycloserine (DCS), a cyclic structural analog of D-alanine, used as an antitubercular agent. Catalyzes the stereoinversion of O-ureido-L-serine to O-ureido-D-serine. The protein is O-ureido-serine racemase of Streptomyces lavendulae.